The sequence spans 125 residues: Glycine cleavage system H protein (125 aa).

One can recognise a Lipoyl-binding domain in the interval 19 to 101; sequence VGTVGISDYA…EGAAWFFKLT (83 aa). N6-lipoyllysine is present on lysine 60.

The protein belongs to the GcvH family. As to quaternary structure, the glycine cleavage system is composed of four proteins: P, T, L and H. (R)-lipoate is required as a cofactor.

The glycine cleavage system catalyzes the degradation of glycine. The H protein shuttles the methylamine group of glycine from the P protein to the T protein. This Paramagnetospirillum magneticum (strain ATCC 700264 / AMB-1) (Magnetospirillum magneticum) protein is Glycine cleavage system H protein.